The following is a 448-amino-acid chain: Phosphoglucosamine mutase (448 aa).

Serine 104 serves as the catalytic Phosphoserine intermediate. Mg(2+)-binding residues include serine 104, aspartate 243, aspartate 245, and aspartate 247. Serine 104 bears the Phosphoserine mark.

This sequence belongs to the phosphohexose mutase family. It depends on Mg(2+) as a cofactor. Activated by phosphorylation.

The enzyme catalyses alpha-D-glucosamine 1-phosphate = D-glucosamine 6-phosphate. Catalyzes the conversion of glucosamine-6-phosphate to glucosamine-1-phosphate. This Xylella fastidiosa (strain Temecula1 / ATCC 700964) protein is Phosphoglucosamine mutase.